The following is a 351-amino-acid chain: MIETDILIIGAGPTGLFTVFEAGLLKLKCHIIDGLPQPGGQLTELYPKKPIFDIPGYPSVLAGDLITNLIEQIKQFQPGFTLNETAETIEKLEDGTFIVTSNKGTKHHANSIAIAGGLGSFEPRKPILKDIEFYENDKGVEYFVKDPEKFRDKKVVISGGGDSALDWSIYLSNIASEVTLVHRRNEFRGALDSVEKVQELKSAGKIKLITPGEVVGFKGSEKIESVDIQVNTTLTTVPCDYFIPLFGLTPKLGAIANWGLEIEKNAIKVNNALDYQTNIEGIYAIGDVNTYPGKLKLILCGFHEATLMVQSVYQRINPGKKYVLKYTTVSGIDGFDGTRKEAEKQVVKSIE.

FAD-binding residues include Thr-14, Asp-33, Gln-41, Tyr-46, Ala-86, Phe-121, Asp-287, and Thr-328.

The protein belongs to the ferredoxin--NADP reductase type 2 family. In terms of assembly, homodimer. FAD is required as a cofactor.

It carries out the reaction 2 reduced [2Fe-2S]-[ferredoxin] + NADP(+) + H(+) = 2 oxidized [2Fe-2S]-[ferredoxin] + NADPH. In Flavobacterium psychrophilum (strain ATCC 49511 / DSM 21280 / CIP 103535 / JIP02/86), this protein is Ferredoxin--NADP reductase.